The primary structure comprises 308 residues: Beta-carotene hydroxylase 2, chloroplastic (308 aa).

A chloroplast-targeting transit peptide spans 1-59 (MAAARISFSSTSRTSYYRHSPFLGPKPTPTTPSVYPITPFSPNLGSILRCRRRPSFTVC). Transmembrane regions (helical) follow at residues 105–125 (YLVAAVMSSFGITSMAVMAVY) and 139–159 (FSEMFGTFALSVGAAVGMEFW). The Fatty acid hydroxylase domain occupies 152-279 (AAVGMEFWAR…KFNGVPYGLF (128 aa)). The short motif at 164–169 (HKALWH) is the Histidine box-1 element. The Histidine box-2 motif lies at 176–180 (HESHH). The next 2 helical transmembrane spans lie at 191–211 (DVFAIINAVPAIALLDYGFFH) and 215–235 (IPGLCFGAGLGITVFGMAYMF). A Histidine box-3 motif is present at residues 237–242 (HDGLVH). Residues 263–267 (HSLHH) carry the Histidine box-4 motif.

Belongs to the sterol desaturase family.

The protein localises to the plastid. It localises to the chloroplast membrane. It catalyses the reaction all-trans-beta-carotene + 4 reduced [2Fe-2S]-[ferredoxin] + 2 O2 + 4 H(+) = all-trans-zeaxanthin + 4 oxidized [2Fe-2S]-[ferredoxin] + 2 H2O. It carries out the reaction all-trans-beta-carotene + 2 reduced [2Fe-2S]-[ferredoxin] + O2 + 2 H(+) = beta-cryptoxanthin + 2 oxidized [2Fe-2S]-[ferredoxin] + H2O. The enzyme catalyses beta-cryptoxanthin + 2 reduced [2Fe-2S]-[ferredoxin] + O2 + 2 H(+) = all-trans-zeaxanthin + 2 oxidized [2Fe-2S]-[ferredoxin] + H2O. With respect to regulation, inhibited by o-phenanthroline and 8-hydroxyquinoline. Nonheme diiron monooxygenase involved in the biosynthesis of xanthophylls. Specific for beta-ring hydroxylations of beta-carotene. Produces beta-cryptoxanthin and zeaxanthin. Uses ferredoxin as an electron donor. This is Beta-carotene hydroxylase 2, chloroplastic from Capsicum annuum (Capsicum pepper).